The chain runs to 154 residues: Xanthine-guanine phosphoribosyltransferase (154 aa).

5-phospho-alpha-D-ribose 1-diphosphate-binding positions include 37–38 and 90–98; these read RG and DDLVDTGNT. Asp91 contributes to the Mg(2+) binding site. The guanine site is built by Asp94 and Ile137. The xanthine site is built by Asp94 and Ile137. GMP is bound by residues 94-98 and 136-137; these read DTGNT and WI.

Belongs to the purine/pyrimidine phosphoribosyltransferase family. XGPT subfamily. Homotetramer. The cofactor is Mg(2+).

It localises to the cell inner membrane. The catalysed reaction is GMP + diphosphate = guanine + 5-phospho-alpha-D-ribose 1-diphosphate. It catalyses the reaction XMP + diphosphate = xanthine + 5-phospho-alpha-D-ribose 1-diphosphate. The enzyme catalyses IMP + diphosphate = hypoxanthine + 5-phospho-alpha-D-ribose 1-diphosphate. Its pathway is purine metabolism; GMP biosynthesis via salvage pathway; GMP from guanine: step 1/1. It participates in purine metabolism; XMP biosynthesis via salvage pathway; XMP from xanthine: step 1/1. In terms of biological role, purine salvage pathway enzyme that catalyzes the transfer of the ribosyl-5-phosphate group from 5-phospho-alpha-D-ribose 1-diphosphate (PRPP) to the N9 position of the 6-oxopurines guanine and xanthine to form the corresponding ribonucleotides GMP (guanosine 5'-monophosphate) and XMP (xanthosine 5'-monophosphate), with the release of PPi. To a lesser extent, also acts on hypoxanthine. This is Xanthine-guanine phosphoribosyltransferase from Histophilus somni (strain 129Pt) (Haemophilus somnus).